The chain runs to 515 residues: MECDLMETDILESLEDLGYKGPLLDDGALLQAVSAGAASPEFTKLCAWLVSELRVLCKLEENVQATNSPSEAEEFQLEVSGLLGEMNCPYPSLTSGDVTKRLLVEKNCLLLLTYLISELEAARMLCVNAPPKKAQEGGGSEVFQELKGICIALGMSKPPANITMFQFFSGIEKKLKETLAKVPPNHVGKPLLKKPMGPAHWEKIEAINQAIANEYEVRRKLLIKRLDVTVQSFGWSDRAKSQTDKLAKVYQPKRSLLSPKGKVSVAHLLAARQDLSKILRTSSGSIREKTACAINKVLMGRVPDRGGRPNEIEPPPPEMPPWQKRQDGPQQQAGGRGGGRGGYEHSSYGGRGGHEQGGRGGRGSYDHGGRGGGRGNKHQGGWTDGGSGSGGGYQDGAYRDSGFQPGGYHGGHSGGYQAGGYGGFQTSSYTGSGYQGGGYQQDNRYQDGGHHGERGSGRGGRGGRGGRGGRGSQGGGWGGRGSQTYHQGGQFEQHFQHGGYQYSHSGFGQGRHYTS.

Disordered stretches follow at residues 297–410 (VLMG…GYHG) and 432–515 (SGYQ…HYTS). The span at 302-311 (VPDRGGRPNE) shows a compositional bias: basic and acidic residues. The span at 382–394 (WTDGGSGSGGGYQ) shows a compositional bias: gly residues. Residues 444–456 (RYQDGGHHGERGS) are compositionally biased toward basic and acidic residues. The span at 457–481 (GRGGRGGRGGRGGRGSQGGGWGGRG) shows a compositional bias: gly residues. The segment covering 485-501 (YHQGGQFEQHFQHGGYQ) has biased composition (low complexity). The span at 502–515 (YSHSGFGQGRHYTS) shows a compositional bias: polar residues.

The protein belongs to the FAM98 family. As to quaternary structure, interacts (via N- and C-terminus) with DDX1. Interacts (via N- and C-terminus) with C14orf166. Interacts with FAM98B. Interacts with PLEKHM1 (via N- and C-terminus).

In terms of biological role, positively stimulates PRMT1-induced protein arginine methylation. Involved in skeletal homeostasis. Positively regulates lysosome peripheral distribution and ruffled border formation in osteoclasts. The chain is Protein FAM98A from Mus musculus (Mouse).